Consider the following 346-residue polypeptide: NADH-quinone oxidoreductase subunit H (346 aa).

A run of 9 helical transmembrane segments spans residues 13-33 (ILLILLQCLLLVVPLLVALAF), 51-71 (PNVVGAFGLLQSFADFLKYIV), 83-103 (AVYFLAPIVSLVMALIAWAVI), 116-136 (VAVLYVFAVSSLEVYGVIMGG), 162-182 (IGLIIIGVIISTGSMNFTAIV), 191-211 (LLNWYFLPHFPMLFLFFISAL), 244-264 (FMIGELVAVVLMCALTVLLFF), 278-298 (VFWMILKMLAVFFMFSMVKAI), and 310-330 (LGWKVFLPFSLFWVVFVAFMA).

Belongs to the complex I subunit 1 family. In terms of assembly, NDH-1 is composed of 14 different subunits. Subunits NuoA, H, J, K, L, M, N constitute the membrane sector of the complex.

The protein localises to the cell inner membrane. The enzyme catalyses a quinone + NADH + 5 H(+)(in) = a quinol + NAD(+) + 4 H(+)(out). NDH-1 shuttles electrons from NADH, via FMN and iron-sulfur (Fe-S) centers, to quinones in the respiratory chain. The immediate electron acceptor for the enzyme in this species is believed to be ubiquinone. Couples the redox reaction to proton translocation (for every two electrons transferred, four hydrogen ions are translocated across the cytoplasmic membrane), and thus conserves the redox energy in a proton gradient. This subunit may bind ubiquinone. The protein is NADH-quinone oxidoreductase subunit H of Jannaschia sp. (strain CCS1).